A 453-amino-acid chain; its full sequence is 3-phosphoshikimate 1-carboxyvinyltransferase (453 aa).

3 residues coordinate 3-phosphoshikimate: lysine 28, serine 29, and arginine 33. Lysine 28 serves as a coordination point for phosphoenolpyruvate. Phosphoenolpyruvate contacts are provided by glycine 101 and arginine 129. Residues serine 174, glutamine 176, aspartate 326, and lysine 353 each contribute to the 3-phosphoshikimate site. Glutamine 176 is a binding site for phosphoenolpyruvate. Aspartate 326 acts as the Proton acceptor in catalysis. 2 residues coordinate phosphoenolpyruvate: arginine 357 and arginine 405.

This sequence belongs to the EPSP synthase family. As to quaternary structure, monomer.

It is found in the cytoplasm. It catalyses the reaction 3-phosphoshikimate + phosphoenolpyruvate = 5-O-(1-carboxyvinyl)-3-phosphoshikimate + phosphate. The protein operates within metabolic intermediate biosynthesis; chorismate biosynthesis; chorismate from D-erythrose 4-phosphate and phosphoenolpyruvate: step 6/7. Catalyzes the transfer of the enolpyruvyl moiety of phosphoenolpyruvate (PEP) to the 5-hydroxyl of shikimate-3-phosphate (S3P) to produce enolpyruvyl shikimate-3-phosphate and inorganic phosphate. This is 3-phosphoshikimate 1-carboxyvinyltransferase from Zymomonas mobilis subsp. mobilis (strain ATCC 31821 / ZM4 / CP4).